The primary structure comprises 219 residues: Protein-L-isoaspartate O-methyltransferase 2 (219 aa).

Serine 66 is a catalytic residue.

This sequence belongs to the methyltransferase superfamily. L-isoaspartyl/D-aspartyl protein methyltransferase family.

Its subcellular location is the cytoplasm. It catalyses the reaction [protein]-L-isoaspartate + S-adenosyl-L-methionine = [protein]-L-isoaspartate alpha-methyl ester + S-adenosyl-L-homocysteine. Catalyzes the methyl esterification of L-isoaspartyl residues in peptides and proteins that result from spontaneous decomposition of normal L-aspartyl and L-asparaginyl residues. It plays a role in the repair and/or degradation of damaged proteins. The chain is Protein-L-isoaspartate O-methyltransferase 2 from Marinobacter nauticus (strain ATCC 700491 / DSM 11845 / VT8) (Marinobacter aquaeolei).